The primary structure comprises 165 residues: Protein SEED AND ROOT HAIR PROTECTIVE PROTEIN (165 aa).

The N-terminal stretch at 1 to 24 (MAFSRLSFAASLIVFSSLIISSVA) is a signal peptide.

Belongs to the plant proline-rich protein superfamily. In terms of tissue distribution, root hair and seed specific expression. Also observed in other tissues including siliques, roots and flowers.

Its subcellular location is the secreted. The protein localises to the cell wall. In terms of biological role, contributes to cell wall structure in root hairs and seeds, especially in phosphate (Pi) deprivation conditions or in the presence of ethylene. Particularly important in maternal tissues (pericarps and seed coats) during seed development, especially under stress conditions. Confers thermotolerance in seed germination rate. The polypeptide is Protein SEED AND ROOT HAIR PROTECTIVE PROTEIN (Arabidopsis thaliana (Mouse-ear cress)).